Reading from the N-terminus, the 390-residue chain is O-phospho-L-seryl-tRNA:Cys-tRNA synthase 2 (390 aa).

Residues Ala83–Arg84, Asn187, and Ser210–His212 each bind pyridoxal 5'-phosphate. Lys213 is subject to N6-(pyridoxal phosphate)lysine.

The protein belongs to the SepCysS family. In terms of assembly, homodimer. Interacts with SepRS. Requires pyridoxal 5'-phosphate as cofactor.

The catalysed reaction is O-phospho-L-seryl-tRNA(Cys) + hydrogen sulfide + H(+) = L-cysteinyl-tRNA(Cys) + phosphate. Its function is as follows. Converts O-phospho-L-seryl-tRNA(Cys) (Sep-tRNA(Cys)) to L-cysteinyl-tRNA(Cys) (Cys-tRNA(Cys)). This is O-phospho-L-seryl-tRNA:Cys-tRNA synthase 2 from Archaeoglobus fulgidus (strain ATCC 49558 / DSM 4304 / JCM 9628 / NBRC 100126 / VC-16).